A 284-amino-acid polypeptide reads, in one-letter code: WUSCHEL-related homeobox 10 (284 aa).

Positions Met1–Arg43 are disordered. Residues Pro39 to Ala103 constitute a DNA-binding region (homeobox; WUS-type).

The protein belongs to the WUS homeobox family.

Its subcellular location is the nucleus. Its function is as follows. Transcription factor which may be involved in developmental processes. The sequence is that of WUSCHEL-related homeobox 10 (WOX10) from Oryza sativa subsp. japonica (Rice).